The sequence spans 147 residues: D-aminoacyl-tRNA deacylase (147 aa).

The Gly-cisPro motif, important for rejection of L-amino acids signature appears at 137-138 (GP).

It belongs to the DTD family. Homodimer.

Its subcellular location is the cytoplasm. It catalyses the reaction glycyl-tRNA(Ala) + H2O = tRNA(Ala) + glycine + H(+). It carries out the reaction a D-aminoacyl-tRNA + H2O = a tRNA + a D-alpha-amino acid + H(+). Functionally, an aminoacyl-tRNA editing enzyme that deacylates mischarged D-aminoacyl-tRNAs. Also deacylates mischarged glycyl-tRNA(Ala), protecting cells against glycine mischarging by AlaRS. Acts via tRNA-based rather than protein-based catalysis; rejects L-amino acids rather than detecting D-amino acids in the active site. By recycling D-aminoacyl-tRNA to D-amino acids and free tRNA molecules, this enzyme counteracts the toxicity associated with the formation of D-aminoacyl-tRNA entities in vivo and helps enforce protein L-homochirality. In Bacillus pumilus (strain SAFR-032), this protein is D-aminoacyl-tRNA deacylase.